We begin with the raw amino-acid sequence, 161 residues long: 2-C-methyl-D-erythritol 2,4-cyclodiphosphate synthase (161 aa).

Asp11 and His13 together coordinate a divalent metal cation. 4-CDP-2-C-methyl-D-erythritol 2-phosphate is bound by residues 11–13 (DIH) and 37–38 (HS). A divalent metal cation is bound at residue His45. 4-CDP-2-C-methyl-D-erythritol 2-phosphate is bound by residues 59-61 (DIG), 135-138 (TTNE), and Arg145.

It belongs to the IspF family. Homotrimer. A divalent metal cation serves as cofactor.

It carries out the reaction 4-CDP-2-C-methyl-D-erythritol 2-phosphate = 2-C-methyl-D-erythritol 2,4-cyclic diphosphate + CMP. It participates in isoprenoid biosynthesis; isopentenyl diphosphate biosynthesis via DXP pathway; isopentenyl diphosphate from 1-deoxy-D-xylulose 5-phosphate: step 4/6. Functionally, involved in the biosynthesis of isopentenyl diphosphate (IPP) and dimethylallyl diphosphate (DMAPP), two major building blocks of isoprenoid compounds. Catalyzes the conversion of 4-diphosphocytidyl-2-C-methyl-D-erythritol 2-phosphate (CDP-ME2P) to 2-C-methyl-D-erythritol 2,4-cyclodiphosphate (ME-CPP) with a corresponding release of cytidine 5-monophosphate (CMP). This Synechocystis sp. (strain ATCC 27184 / PCC 6803 / Kazusa) protein is 2-C-methyl-D-erythritol 2,4-cyclodiphosphate synthase.